Here is a 540-residue protein sequence, read N- to C-terminus: Coatomer subunit delta (540 aa).

Positions 169 to 263 are disordered; the sequence is RHEEMLRGKR…GMILGGKSGT (95 aa). Positions 179-197 are enriched in gly residues; sequence SGGYTGISGGGGMGSGGMG. Over residues 212–229 the composition is skewed to low complexity; the sequence is NNNNNNNNNNNNNNNNNN. A compositionally biased stretch (polar residues) spans 238–250; sequence SPNTSRPSAASSG. Over residues 251 to 261 the composition is skewed to gly residues; sequence SQGGMILGGKS. The region spanning 304–540 is the MHD domain; that stretch reads QEGVHITVEE…TLSVDTYEIK (237 aa).

It belongs to the adaptor complexes medium subunit family. Delta-COP subfamily. In terms of assembly, oligomeric complex that consists of at least the alpha, beta, beta', gamma, delta, epsilon and zeta subunits.

It localises to the cytoplasm. It is found in the golgi apparatus membrane. The protein localises to the cytoplasmic vesicle. The protein resides in the COPI-coated vesicle membrane. Its function is as follows. The coatomer is a cytosolic protein complex that binds to dilysine motifs and reversibly associates with Golgi non-clathrin-coated vesicles, which further mediate biosynthetic protein transport from the ER, via the Golgi up to the trans Golgi network. Coatomer complex is required for budding from Golgi membranes, and is essential for the retrograde Golgi-to-ER transport of dilysine-tagged proteins. The protein is Coatomer subunit delta (copd) of Dictyostelium discoideum (Social amoeba).